We begin with the raw amino-acid sequence, 185 residues long: Lactoylglutathione lyase (185 aa).

The tract at residues 1-22 is disordered; the sequence is MASEARESPANNPGLSTNRDEA. Residues 27-174 enclose the VOC domain; it reads IMQQTMFRIK…DGYWIEIFDL (148 aa). 2 residues coordinate substrate: Q30 and R34. Q30 is a Zn(2+) binding site. E96 lines the Zn(2+) pocket. Substrate is bound by residues N100, R120, H124, and 154–155; that span reads KM. H124 serves as a coordination point for Zn(2+). E170 serves as a coordination point for Zn(2+). The Proton donor/acceptor role is filled by E170.

It belongs to the glyoxalase I family. The cofactor is Zn(2+).

It carries out the reaction (R)-S-lactoylglutathione = methylglyoxal + glutathione. It functions in the pathway secondary metabolite metabolism; methylglyoxal degradation; (R)-lactate from methylglyoxal: step 1/2. Catalyzes the conversion of hemimercaptal, formed from methylglyoxal and glutathione, to S-lactoylglutathione. The protein is Lactoylglutathione lyase of Arabidopsis thaliana (Mouse-ear cress).